Reading from the N-terminus, the 365-residue chain is 4-hydroxy-3-methylbut-2-en-1-yl diphosphate synthase (flavodoxin) (365 aa).

4 residues coordinate [4Fe-4S] cluster: cysteine 265, cysteine 268, cysteine 300, and glutamate 307.

Belongs to the IspG family. The cofactor is [4Fe-4S] cluster.

The catalysed reaction is (2E)-4-hydroxy-3-methylbut-2-enyl diphosphate + oxidized [flavodoxin] + H2O + 2 H(+) = 2-C-methyl-D-erythritol 2,4-cyclic diphosphate + reduced [flavodoxin]. It functions in the pathway isoprenoid biosynthesis; isopentenyl diphosphate biosynthesis via DXP pathway; isopentenyl diphosphate from 1-deoxy-D-xylulose 5-phosphate: step 5/6. Converts 2C-methyl-D-erythritol 2,4-cyclodiphosphate (ME-2,4cPP) into 1-hydroxy-2-methyl-2-(E)-butenyl 4-diphosphate. This is 4-hydroxy-3-methylbut-2-en-1-yl diphosphate synthase (flavodoxin) from Bacillus mycoides (strain KBAB4) (Bacillus weihenstephanensis).